The primary structure comprises 327 residues: D-alanine--D-alanine ligase (327 aa).

Positions 113-312 (KRLWMTHDLS…YEDFVMQVVA (200 aa)) constitute an ATP-grasp domain. 139 to 194 (VADLGLPLIVKPAREGSSIGLSKVTDASQMREAFEKAAALDNDVIAETFIDGAELT) is an ATP binding site. Mg(2+) is bound by residues Asp-266, Glu-279, and Asn-281.

Belongs to the D-alanine--D-alanine ligase family. It depends on Mg(2+) as a cofactor. Mn(2+) serves as cofactor.

It localises to the cytoplasm. The enzyme catalyses 2 D-alanine + ATP = D-alanyl-D-alanine + ADP + phosphate + H(+). It participates in cell wall biogenesis; peptidoglycan biosynthesis. Functionally, cell wall formation. The polypeptide is D-alanine--D-alanine ligase (Cupriavidus pinatubonensis (strain JMP 134 / LMG 1197) (Cupriavidus necator (strain JMP 134))).